The following is a 478-amino-acid chain: Noelin-2 (478 aa).

The first 16 residues, 1–16, serve as a signal peptide directing secretion; the sequence is MSVPLLKIGAVLSTMA. Residues asparagine 33, asparagine 98, asparagine 179, asparagine 299, asparagine 334, asparagine 423, and asparagine 465 are each glycosylated (N-linked (GlcNAc...) asparagine). Coiled-coil stretches lie at residues 86–109 and 160–218; these read SREL…LELR and LEQY…QKLG. The 253-residue stretch at 218-470 folds into the Olfactomedin-like domain; sequence GCGKLTGVSN…QVLYNVTLFH (253 aa). Cysteine 219 and cysteine 401 form a disulfide bridge.

In terms of assembly, peripherally associated with AMPAR complex. AMPAR complex consists of an inner core made of 4 pore-forming GluA/GRIA proteins (GRIA1, GRIA2, GRIA3 and GRIA4) and 4 major auxiliary subunits arranged in a twofold symmetry. One of the two pairs of distinct binding sites is occupied either by CNIH2, CNIH3 or CACNG2, CACNG3. The other harbors CACNG2, CACNG3, CACNG4, CACNG8 or GSG1L. This inner core of AMPAR complex is complemented by outer core constituents binding directly to the GluA/GRIA proteins at sites distinct from the interaction sites of the inner core constituents. Outer core constituents include at least PRRT1, PRRT2, CKAMP44/SHISA9, FRRS1L and NRN1. The proteins of the inner and outer core serve as a platform for other, more peripherally associated AMPAR constituents, including OLFM2. Alone or in combination, these auxiliary subunits control the gating and pharmacology of the AMPAR complex and profoundly impact their biogenesis and protein processing. Interacts with GRIA2. Interacts with OLFM1 and OLFM3. Interacts with SRF; the interaction promotes dissociation of SRF from the transcriptional repressor HEY2. Interacts with RUNX2. Expressed in the brain (at protein level). Expressed in carotid arteries and the aorta, mainly in aortic SMCs.

Its subcellular location is the secreted. It localises to the synapse. The protein resides in the membrane. It is found in the nucleus. The protein localises to the cytoplasm. Involved in transforming growth factor beta (TGF-beta)-induced smooth muscle differentiation. TGF-beta induces expression and nuclear translocation of OLFM2 where it binds to SRF, causing its dissociation from the transcriptional repressor HEY2/HERP1 and facilitating binding of SRF to target genes. Plays a role in AMPAR complex organization. Is a regulator of vascular smooth-muscle cell (SMC) phenotypic switching, that acts by promoting RUNX2 and inhibiting MYOCD binding to SRF. SMC phenotypic switching is the process through which vascular SMCs undergo transition between a quiescent contractile phenotype and a proliferative synthetic phenotype in response to pathological stimuli. SMC phenotypic plasticity is essential for vascular development and remodeling. This is Noelin-2 (Olfm2) from Rattus norvegicus (Rat).